Consider the following 750-residue polypeptide: MIIRSPESEVKIVVDRDPVKTSFEEWAKPGHFSRTIAKGPDTTTWIWNLHADAHDFDSHTSDLEEISRKVFSAHFGQLSIIFLWLSGMYFHGARFSNYEAWLSDPTHIGPSAQVVWPIVGQEILNGDVGGGFRGIQITSGFFQLWRASGITNELQLYCTAIGALVFAGLMLFAGWFHYHKAAPKLSWFQDVESMLNHHLAGLLGLGSLSWAGHQVHVSLPINQFLDAGVDPKEIPLPHEFILNRDLLAQLYPSFAEGATPLFTLNWSKYAEFLTFRGGLDPTTGGLWLTDIVHHHLAIAILFLIAGHMYRTNWGIGHSLKDILEAHKGPFTGQGHKGLYEILTTSWHAQLSLNLAMLGSLTIVVAHHMYSMPPYPYLATDYGTQLSLFTHHMWIGGFLIVGAAAHAAIFMVRDYDPTTRYNDLLDRVLRHRDAIISHLNWACIFLGFHSFGLYIHNDTMSALGRPQDMFSDTAIQLQPIFAQWIQNTHALAPSATAPGAIASTSLTWGGADLVAVGGKVALLPIPLGTADFLVHHIHAFTIHVTVLILLKGVLFARSSRLIPDKANLGFRFPCDGPGRGGTCQVSAWDHVFLGLFWMYNAISVVIFHFSWKMQSDVWGSISDQGVVTHITGGNFAQSSITINGWLRDFLWAQASQVIQSYGSSLSAYGLFFLGAHFVWAFSLMFLFSGRGYWQELIESIVWAHNKLKVAPATQPRALSIVQGRAVGVTHYLLGGIATTWAFFLARIIAVG.

8 consecutive transmembrane segments (helical) span residues valine 70–alanine 93, leucine 156–histidine 179, leucine 195–leucine 219, isoleucine 291–tyrosine 309, tryptophan 346–tyrosine 369, leucine 385–valine 411, alanine 433–histidine 455, and phenylalanine 531–leucine 549. 2 residues coordinate [4Fe-4S] cluster: cysteine 573 and cysteine 582. A run of 2 helical transmembrane segments spans residues histidine 589–tryptophan 610 and leucine 664–phenylalanine 686. Histidine 675 provides a ligand contact to chlorophyll a'. Methionine 683 and tyrosine 691 together coordinate chlorophyll a. Tryptophan 692 is a phylloquinone binding site. The chain crosses the membrane as a helical span at residues alanine 724 to alanine 744.

The protein belongs to the PsaA/PsaB family. In terms of assembly, the PsaA/B heterodimer binds the P700 chlorophyll special pair and subsequent electron acceptors. PSI consists of a core antenna complex that captures photons, and an electron transfer chain that converts photonic excitation into a charge separation. The eukaryotic PSI reaction center is composed of at least 11 subunits. The cofactor is P700 is a chlorophyll a/chlorophyll a' dimer, A0 is one or more chlorophyll a, A1 is one or both phylloquinones and FX is a shared 4Fe-4S iron-sulfur center..

It localises to the plastid. The protein localises to the chloroplast thylakoid membrane. The enzyme catalyses reduced [plastocyanin] + hnu + oxidized [2Fe-2S]-[ferredoxin] = oxidized [plastocyanin] + reduced [2Fe-2S]-[ferredoxin]. Its function is as follows. PsaA and PsaB bind P700, the primary electron donor of photosystem I (PSI), as well as the electron acceptors A0, A1 and FX. PSI is a plastocyanin-ferredoxin oxidoreductase, converting photonic excitation into a charge separation, which transfers an electron from the donor P700 chlorophyll pair to the spectroscopically characterized acceptors A0, A1, FX, FA and FB in turn. Oxidized P700 is reduced on the lumenal side of the thylakoid membrane by plastocyanin. The sequence is that of Photosystem I P700 chlorophyll a apoprotein A1 from Piper cenocladum (Ant piper).